A 338-amino-acid polypeptide reads, in one-letter code: Nodulation outer protein L (338 aa).

Positions 1–14 are enriched in polar residues; that stretch reads MDINSTSPLNASPQ. Disordered stretches follow at residues 1–48, 85–158, 187–209, and 230–259; these read MDIN…LPQV, TRER…DLET, SPAP…PHAR, and PQAG…SSAG. A compositionally biased stretch (basic and acidic residues) spans 85-97; the sequence is TRERSPHPSEQRP. A compositionally biased stretch (polar residues) spans 126-138; that stretch reads VGPSRSGPSQAGL. Residues 242-258 are compositionally biased toward polar residues; it reads SGPSQARPSHAWPSSSA.

Its subcellular location is the secreted. Putative symbiotic effector that modulates nodulation in legumes. When delivered into the plant cell, modulates the activity of signal transduction pathways that culminate in activation of PR proteins. The sequence is that of Nodulation outer protein L (nopL) from Sinorhizobium fredii (strain NBRC 101917 / NGR234).